A 347-amino-acid polypeptide reads, in one-letter code: Ileal sodium/bile acid cotransporter (347 aa).

Topologically, residues 1–29 are extracellular; sequence MSNLTVGCLANATVCEGASCVAPESNFNA. N-linked (GlcNAc...) asparagine glycosylation is found at Asn-3 and Asn-11. The chain crosses the membrane as a helical span at residues 30–50; it reads ILSVVLSTVLTILLALVMFSM. At 51–83 the chain is on the cytoplasmic side; it reads GCNVEIKKFLGHIRRPWGIFIGFLCQFGIMPLT. A helical transmembrane segment spans residues 84-104; sequence GFVLAVAFGIMPIQAVVVLIM. At 105 to 127 the chain is on the extracellular side; it reads GCCPGGTASNILAYWVDGDMDLS. Residues 128–148 traverse the membrane as a helical segment; it reads VSMTTCSTLLALGMMPLCLYV. Residues 149-158 are Cytoplasmic-facing; that stretch reads YTKMWVDSGT. A helical transmembrane segment spans residues 159-179; that stretch reads IVIPYDNIGTSLVALVVPVSI. Over 180-196 the chain is Extracellular; it reads GMFVNHKWPQKAKIILK. The chain crosses the membrane as a helical span at residues 197–217; it reads VGSIAGAVLIVLIAVVGGILY. At 218-225 the chain is on the cytoplasmic side; that stretch reads QSAWIIEP. Residues 226–246 form a helical membrane-spanning segment; it reads KLWIIGTIFPMAGYSLGFFLA. At 247–289 the chain is on the extracellular side; the sequence is RIAGQPWYRCRTVALETGMQNTQLCSTIVQLSFSPEDLTYVFT. The chain crosses the membrane as a helical span at residues 290–310; sequence FPLIYSIFQIAFAAIFLGIYV. Residues 311–347 are Cytoplasmic-facing; the sequence is AYRKCHGKNDAEFPDIKDTKTEPESSFHQMNGGFQPE. Basic and acidic residues predominate over residues 323–335; it reads FPDIKDTKTEPES. Residues 323–347 are disordered; the sequence is FPDIKDTKTEPESSFHQMNGGFQPE. Ser-336 is modified (phosphoserine).

Belongs to the bile acid:sodium symporter (BASS) (TC 2.A.28) family. In terms of assembly, monomer and homodimer.

The protein localises to the membrane. It catalyses the reaction taurocholate(out) + 2 Na(+)(out) = taurocholate(in) + 2 Na(+)(in). The catalysed reaction is cholate(out) + 2 Na(+)(out) = cholate(in) + 2 Na(+)(in). The enzyme catalyses taurochenodeoxycholate(out) + 2 Na(+)(out) = taurochenodeoxycholate(in) + 2 Na(+)(in). It carries out the reaction tauroursodeoxycholate(out) + 2 Na(+)(out) = tauroursodeoxycholate(in) + 2 Na(+)(in). It catalyses the reaction glycocholate(out) + 2 Na(+)(out) = glycocholate(in) + 2 Na(+)(in). The catalysed reaction is tauronorcholate(out) + 2 Na(+)(out) = tauronorcholate(in) + 2 Na(+)(in). The enzyme catalyses tauroallocholate(out) + 2 Na(+)(out) = tauroallocholate(in) + 2 Na(+)(in). It carries out the reaction taurodeoxycholate(out) + 2 Na(+)(out) = taurodeoxycholate(in) + 2 Na(+)(in). It catalyses the reaction tauro-beta-muricholate(out) + 2 Na(+)(out) = tauro-beta-muricholate(in) + 2 Na(+)(in). Functionally, plays a critical role in the sodium-dependent reabsorption of bile acids from the lumen of the small intestine. Transports various bile acids, unconjugated or conjugated, such as cholate and taurocholate. Also responsible for bile acid transport in the renal proximal tubules, a salvage mechanism that helps conserve bile acids. Works collaboratively with the Na(+)-taurocholate cotransporting polypeptide (NTCP), the organic solute transporter (OST), and the bile salt export pump (BSEP), to ensure efficacious biological recycling of bile acids during enterohepatic circulation. This is Ileal sodium/bile acid cotransporter (SLC10A2) from Oryctolagus cuniculus (Rabbit).